A 101-amino-acid polypeptide reads, in one-letter code: MLADKVKLSAKEILEKEFKTGVRGYKQEEVDKFLDMVIKDYETFNQEIEKLQQENLHLSKQLEEAVEQGKRQPAQSNTTNFDILKRLSNLEKHVFGSKLYD.

Residues L34–R71 adopt a coiled-coil conformation.

This sequence belongs to the GpsB family. Forms polymers through the coiled coil domains. Interacts with PBP1, MreC and EzrA.

It is found in the cytoplasm. Divisome component that associates with the complex late in its assembly, after the Z-ring is formed, and is dependent on DivIC and PBP2B for its recruitment to the divisome. Together with EzrA, is a key component of the system that regulates PBP1 localization during cell cycle progression. Its main role could be the removal of PBP1 from the cell pole after pole maturation is completed. Also contributes to the recruitment of PBP1 to the division complex. Not essential for septum formation. The sequence is that of Cell cycle protein GpsB from Bacillus pumilus (strain SAFR-032).